A 1396-amino-acid chain; its full sequence is MRPVCTVVVDGLPSESTSSSYPGPVSVSDMSLLHALGPVQTWLGQELEKCGIDAMIYSRYILSLLLHDSYDYDLQEQENDILSWEKGAYKKWGRSKKKCSDLTLEEMKKQAAVQCLRSASDESSGIETLVEELCCRLKDLQSEQEEKIHKKLEGSPSPEEELSPTAKDQVEMYYEAFPPLSEKPVCLQEIMTVWNKSKPCSYSSSSSSSTVPPASTDTSSPKDCNSESEAVRERSSVASVPMHEKAQSRSRHEKESKLSSSTIEEKPAFYKRQIRHKPEGKTRPRSWSSGSSEAGSSSSGNQGELKASMKYVKVRHKAREIRNRKGRNGQNRHSLKHCGKAERGVHAGSGGSSSSSSNGSIRQLCKRGKRPAKETGRSDSGNTAVKDLYVDSRNNKEYKEEPLWYTEPIAEYFVPLSRKSKLETTYRNREDTSTLTAEAVEDLSDSVRGLCISNSNIHRTYLAAGTFIDGHFVEMPAVINEDIDLAGTSLCSLPEDNKYLDDIHLSELTHFYEVDIDQSMLDPGASETMQGESRILNMIRQKSKENTDFEAECCIVLDGMELQGERAIWTDSTSSVGAEGFFLQDLGNLAQFWECCSSSSGDADGESFGGDSPVRLSPILDSTMLSSHILAGNQEPFSNINEGSGINSCFSVFEVQCSNSVLPFSFETLNLGSEHADSSANMLGKTQSRLLIWTKNSAFEENEHCSNLSTRTCSPWSHSEEARSDNETLNIQFEESTQFTAEDINYVVPRVSSDFVDEELLDFLQDETCQQNSRTLGEIPTLVFKKRSKLESVCGIQLEQKAESKNFETTHACSESSPHGDGYSSGVIKDIWTKMVGRSSVAAVETERTGEELFSTDVNNYCCCLDTEAKMEALQEPSRAVQRSEYHLWEGQKENMEKRAFVSSELSKVDGGDYTTPSKPWDVAQDKENTFILGGVYGELKTFNSDGEWAVVPPGHTKGSLLQCAASDVVTIAGTDVFMTPGNSFAPGHRQLWKPFVSFEQSDMPKRGENGVNKGFSFIFHEDLLGACSNFQVEDPGLEYSLSSFDLSNPFSQVLHVECSFEPEGIASFSPSFKPKSILCSDSDSEVFHPRICGVERTQYRAIRISPRTHFRPISASELSPGGGSESEFESEKDEASVPIPSHVDVFEDPQADLKPLEEDAEKEGHYYGKLELESGKFLPRLKKSGMEKSAQTSLDSQEEATGILPKQNQCLECNFNESLEINLESSAANCKIMTQCEEEMSEFCSCKAGCQFPACEDNPVSSGQLEEFPVLNTDVQEVTRNQEKQSWWEKALYSPLFPTSECEECYTNAKGENGIEECPDAKETPSREERLLDFNRVSSVYEARCTGERGSETKPNGLHRKMCSSASSDTGDTGSEAGGEWVGPSREELFSRTHL.

88–95 is an ATP binding site; the sequence is AYKKWGRS. Disordered regions lie at residues 146–165 and 198–388; these read EKIH…LSPT and KPCS…VKDL. Over residues 198–221 the composition is skewed to low complexity; sequence KPCSYSSSSSSSTVPPASTDTSSP. Basic and acidic residues predominate over residues 242-268; that stretch reads MHEKAQSRSRHEKESKLSSSTIEEKPA. The segment covering 286–300 has biased composition (low complexity); that stretch reads SWSSGSSEAGSSSSG. Residues 312–327 show a composition bias toward basic residues; it reads VKVRHKAREIRNRKGR. Phosphoserine occurs at positions 817 and 1083. Positions 1113-1137 are disordered; it reads PISASELSPGGGSESEFESEKDEAS. A phosphoserine mark is found at serine 1197 and serine 1339. The interval 1347-1396 is disordered; it reads TGERGSETKPNGLHRKMCSSASSDTGDTGSEAGGEWVGPSREELFSRTHL. Low complexity predominate over residues 1365–1376; it reads SSASSDTGDTGS. Basic and acidic residues predominate over residues 1386–1396; the sequence is SREELFSRTHL.

This is an uncharacterized protein from Mus musculus (Mouse).